The primary structure comprises 379 residues: Cytochrome b (379 aa).

The next 4 membrane-spanning stretches (helical) occupy residues 33–53, 77–98, 113–133, and 178–198; these read FGSL…FLAM, WLIR…FIHV, WNIG…GYVL, and FFAF…VHLL. Residues histidine 83 and histidine 97 each contribute to the heme b site. Heme b contacts are provided by histidine 182 and histidine 196. Histidine 201 is a binding site for a ubiquinone. 4 helical membrane passes run 226 to 246, 288 to 308, 320 to 340, and 347 to 367; these read IKDL…ALFF, LGGV…PLLN, ITQT…WIGG, and FTMI…ILMP.

This sequence belongs to the cytochrome b family. In terms of assembly, the cytochrome bc1 complex contains 11 subunits: 3 respiratory subunits (MT-CYB, CYC1 and UQCRFS1), 2 core proteins (UQCRC1 and UQCRC2) and 6 low-molecular weight proteins (UQCRH/QCR6, UQCRB/QCR7, UQCRQ/QCR8, UQCR10/QCR9, UQCR11/QCR10 and a cleavage product of UQCRFS1). This cytochrome bc1 complex then forms a dimer. Heme b serves as cofactor.

The protein localises to the mitochondrion inner membrane. Its function is as follows. Component of the ubiquinol-cytochrome c reductase complex (complex III or cytochrome b-c1 complex) that is part of the mitochondrial respiratory chain. The b-c1 complex mediates electron transfer from ubiquinol to cytochrome c. Contributes to the generation of a proton gradient across the mitochondrial membrane that is then used for ATP synthesis. The sequence is that of Cytochrome b (MT-CYB) from Akodon dolores (Dolorous grass mouse).